The primary structure comprises 382 residues: Lipid-A-disaccharide synthase (382 aa).

This sequence belongs to the LpxB family.

It carries out the reaction 2-N,3-O-bis[(3R)-3-hydroxytetradecanoyl]-alpha-D-glucosaminyl 1-phosphate + UDP-2-N,3-O-bis[(3R)-3-hydroxytetradecanoyl]-alpha-D-glucosamine = lipid A disaccharide (E. coli) + UDP + H(+). The catalysed reaction is a lipid X + a UDP-2-N,3-O-bis[(3R)-3-hydroxyacyl]-alpha-D-glucosamine = a lipid A disaccharide + UDP + H(+). It participates in glycolipid biosynthesis; lipid IV(A) biosynthesis; lipid IV(A) from (3R)-3-hydroxytetradecanoyl-[acyl-carrier-protein] and UDP-N-acetyl-alpha-D-glucosamine: step 5/6. Functionally, condensation of UDP-2,3-diacylglucosamine and 2,3-diacylglucosamine-1-phosphate to form lipid A disaccharide, a precursor of lipid A, a phosphorylated glycolipid that anchors the lipopolysaccharide to the outer membrane of the cell. This is Lipid-A-disaccharide synthase from Escherichia coli (strain ATCC 8739 / DSM 1576 / NBRC 3972 / NCIMB 8545 / WDCM 00012 / Crooks).